The sequence spans 481 residues: uncharacterized protein (481 aa).

11 helical membrane passes run 14–34, 46–66, 90–110, 134–154, 167–187, 218–238, 258–278, 303–323, 377–397, 411–431, and 446–466; these read LGFC…GIFL, FAPM…IVFA, IGIY…GVLA, FSVK…INLF, TVGK…IITT, FSSM…FESI, IAIF…MLLG, IIVV…SFGA, LAVI…IALA, AFTD…LAVS, and YFSI…AYLH.

Belongs to the amino acid-polyamine-organocation (APC) superfamily.

The protein localises to the cell membrane. Functionally, probable amino-acid or metabolite transport protein. This is an uncharacterized protein from Mycobacterium bovis (strain ATCC BAA-935 / AF2122/97).